A 484-amino-acid chain; its full sequence is Glutamyl-tRNA(Gln) amidotransferase subunit A (484 aa).

Catalysis depends on charge relay system residues lysine 76 and serine 151. Serine 175 acts as the Acyl-ester intermediate in catalysis.

Belongs to the amidase family. GatA subfamily. In terms of assembly, heterotrimer of A, B and C subunits.

It catalyses the reaction L-glutamyl-tRNA(Gln) + L-glutamine + ATP + H2O = L-glutaminyl-tRNA(Gln) + L-glutamate + ADP + phosphate + H(+). In terms of biological role, allows the formation of correctly charged Gln-tRNA(Gln) through the transamidation of misacylated Glu-tRNA(Gln) in organisms which lack glutaminyl-tRNA synthetase. The reaction takes place in the presence of glutamine and ATP through an activated gamma-phospho-Glu-tRNA(Gln). The chain is Glutamyl-tRNA(Gln) amidotransferase subunit A from Saccharophagus degradans (strain 2-40 / ATCC 43961 / DSM 17024).